We begin with the raw amino-acid sequence, 574 residues long: Pentatricopeptide repeat-containing protein At5g25630 (574 aa).

Over residues 1–21 the composition is skewed to basic and acidic residues; that stretch reads MEDVNQEKKKVPPMSEPERST. The disordered stretch occupies residues 1 to 25; sequence MEDVNQEKKKVPPMSEPERSTPIKT. PPR repeat units follow at residues 44–78, 79–113, 114–148, 149–183, 187–221, 222–258, 259–293, 294–328, 329–363, 364–394, 398–432, and 433–467; these read TVRS…GHRP, SLIS…GTKL, DSIF…GLNP, TTST…GNVD, NIRT…GVRP, DTVT…KAKP, NGRT…RVEA, NLVV…NVKA, DVIT…GVKP, DAHA…LIVE, NVVI…GVSP, and NIKT…GVKP.

Belongs to the PPR family. P subfamily.

In Arabidopsis thaliana (Mouse-ear cress), this protein is Pentatricopeptide repeat-containing protein At5g25630.